A 758-amino-acid chain; its full sequence is 5-methyltetrahydropteroyltriglutamate--homocysteine methyltransferase (758 aa).

Residues 16-19 (RELK) and Lys112 each bind 5-methyltetrahydropteroyltri-L-glutamate. L-homocysteine is bound by residues 433 to 435 (IGS) and Glu486. L-methionine-binding positions include 433 to 435 (IGS) and Glu486. 5-methyltetrahydropteroyltri-L-glutamate-binding positions include 517 to 518 (RC) and Trp563. Asp601 lines the L-homocysteine pocket. Asp601 is an L-methionine binding site. Glu607 contributes to the 5-methyltetrahydropteroyltri-L-glutamate binding site. Zn(2+)-binding residues include His643, Cys645, and Glu667. Catalysis depends on His696, which acts as the Proton donor. Cys728 provides a ligand contact to Zn(2+).

It belongs to the vitamin-B12 independent methionine synthase family. Zn(2+) serves as cofactor.

It catalyses the reaction 5-methyltetrahydropteroyltri-L-glutamate + L-homocysteine = tetrahydropteroyltri-L-glutamate + L-methionine. Its pathway is amino-acid biosynthesis; L-methionine biosynthesis via de novo pathway; L-methionine from L-homocysteine (MetE route): step 1/1. Functionally, catalyzes the transfer of a methyl group from 5-methyltetrahydrofolate to homocysteine resulting in methionine formation. The chain is 5-methyltetrahydropteroyltriglutamate--homocysteine methyltransferase from Neisseria meningitidis serogroup A / serotype 4A (strain DSM 15465 / Z2491).